The chain runs to 180 residues: Pro-glucagon (180 aa).

Residues 1-20 form the signal peptide; that stretch reads MKSIYFVAGLFVMLVQGSWQ. Residues 23 to 56 form a disordered region; that stretch reads LQDTEEKPRSFSTSQTDLLDDPDQMNEDKRHSQG. Ser-54 bears the Phosphoserine mark. Residues 84 to 89 constitute a propeptide that is removed on maturation; that stretch reads NRNEIA. Phosphoserine occurs at positions 105 and 108. Arg-127 carries the post-translational modification Arginine amide. The propeptide occupies 131–145; sequence DFPEEVTIVEELRRR. Phosphoserine occurs at positions 150 and 152.

The protein belongs to the glucagon family. Post-translationally, proglucagon is post-translationally processed in a tissue-specific manner in pancreatic A cells and intestinal L cells. In pancreatic A cells, the major bioactive hormone is glucagon cleaved by PCSK2/PC2. In the intestinal L cells PCSK1/PC1 liberates GLP-1, GLP-2, glicentin and oxyntomodulin. GLP-1 is further N-terminally truncated by post-translational processing in the intestinal L cells resulting in GLP-1(7-37) GLP-1-(7-36)amide. The C-terminal amidation is neither important for the metabolism of GLP-1 nor for its effects on the endocrine pancreas. As to expression, glucagon is secreted in the A cells of the islets of Langerhans. GLP-1, GLP-2, oxyntomodulin and glicentin are secreted from enteroendocrine cells throughout the gastrointestinal tract. GLP-1 and GLP-2 are also secreted in selected neurons in the brain.

It is found in the secreted. In terms of biological role, plays a key role in glucose metabolism and homeostasis. Regulates blood glucose by increasing gluconeogenesis and decreasing glycolysis. A counterregulatory hormone of insulin, raises plasma glucose levels in response to insulin-induced hypoglycemia. Plays an important role in initiating and maintaining hyperglycemic conditions in diabetes. Potent stimulator of glucose-dependent insulin release. Also stimulates insulin release in response to IL6. Plays important roles on gastric motility and the suppression of plasma glucagon levels. May be involved in the suppression of satiety and stimulation of glucose disposal in peripheral tissues, independent of the actions of insulin. Has growth-promoting activities on intestinal epithelium. May also regulate the hypothalamic pituitary axis (HPA) via effects on LH, TSH, CRH, oxytocin, and vasopressin secretion. Increases islet mass through stimulation of islet neogenesis and pancreatic beta cell proliferation. Inhibits beta cell apoptosis. Its function is as follows. Stimulates intestinal growth and up-regulates villus height in the small intestine, concomitant with increased crypt cell proliferation and decreased enterocyte apoptosis. The gastrointestinal tract, from the stomach to the colon is the principal target for GLP-2 action. Plays a key role in nutrient homeostasis, enhancing nutrient assimilation through enhanced gastrointestinal function, as well as increasing nutrient disposal. Stimulates intestinal glucose transport and decreases mucosal permeability. Functionally, significantly reduces food intake. Inhibits gastric emptying in humans. Suppression of gastric emptying may lead to increased gastric distension, which may contribute to satiety by causing a sensation of fullness. In terms of biological role, may modulate gastric acid secretion and the gastro-pyloro-duodenal activity. May play an important role in intestinal mucosal growth in the early period of life. The polypeptide is Pro-glucagon (GCG) (Octodon degus (Degu)).